A 68-amino-acid chain; its full sequence is Conotoxin PnMLKM-011 (68 aa).

Positions 1-17 (MGVVLFIFLVLFPLATL) are cleaved as a signal peptide. The propeptide occupies 18 to 51 (QLDPDQPVERYAENKQLLNPDERRGIILHALGQR). Intrachain disulfides connect C53/C65, C54/C63, and C59/C66. L67 is subject to Leucine amide.

Belongs to the conotoxin M superfamily. In terms of tissue distribution, expressed by the venom duct.

The protein localises to the secreted. The chain is Conotoxin PnMLKM-011 from Conus pennaceus (Feathered cone).